A 240-amino-acid polypeptide reads, in one-letter code: 2,3,4,5-tetrahydropyridine-2,6-dicarboxylate N-acetyltransferase (240 aa).

Belongs to the transferase hexapeptide repeat family. DapH subfamily.

It carries out the reaction (S)-2,3,4,5-tetrahydrodipicolinate + acetyl-CoA + H2O = L-2-acetamido-6-oxoheptanedioate + CoA. Its pathway is amino-acid biosynthesis; L-lysine biosynthesis via DAP pathway; LL-2,6-diaminopimelate from (S)-tetrahydrodipicolinate (acetylase route): step 1/3. Its function is as follows. Catalyzes the transfer of an acetyl group from acetyl-CoA to tetrahydrodipicolinate. The polypeptide is 2,3,4,5-tetrahydropyridine-2,6-dicarboxylate N-acetyltransferase (Bacillus cytotoxicus (strain DSM 22905 / CIP 110041 / 391-98 / NVH 391-98)).